A 142-amino-acid chain; its full sequence is Hdr-like menaquinol oxidoreductase cytochrome c subunit (142 aa).

At 1 to 6 the chain is on the cytoplasmic side; it reads MYNKKY. The chain crosses the membrane as a helical span at residues 7–27; it reads VIPLILVFLIGFFTPYWYNAM. Over 28–142 the chain is Extracellular; that stretch reads AGTLGHVPTL…GIEELSKYFS (115 aa). Positions 93, 96, 97, 104, 107, 108, 117, 120, and 121 each coordinate heme.

As to quaternary structure, consists of five subunits: an integral membrane subunit, a cytochrome b-like subunit, a cytochrome c subunit and two iron-sulfur subunits. Post-translationally, binds 3 heme groups per subunit.

It localises to the cell membrane. Its function is as follows. Has menaquinol-oxidizing activity. HmeA, HmeB and HmeE subunits may together catalyze electron transfer from menaquinol to cytochrome c. The polypeptide is Hdr-like menaquinol oxidoreductase cytochrome c subunit (hmeE) (Archaeoglobus fulgidus (strain ATCC 49558 / DSM 4304 / JCM 9628 / NBRC 100126 / VC-16)).